We begin with the raw amino-acid sequence, 208 residues long: Small ribosomal subunit protein eS1 (208 aa).

It belongs to the eukaryotic ribosomal protein eS1 family.

The sequence is that of Small ribosomal subunit protein eS1 from Saccharolobus islandicus (strain Y.N.15.51 / Yellowstone #2) (Sulfolobus islandicus).